The sequence spans 177 residues: Nuclear export protein (177 aa).

Short sequence motifs (nuclear export signal) lie at residues 91–100 (LWLPMKSLSL) and 117–127 (MKHQILTRLKL).

In terms of assembly, binds M1 protein. May interact with human nucleoporins and exportin XPO1/CRM1.

The protein resides in the virion. Its subcellular location is the host nucleus. In terms of biological role, mediates the nuclear export of encapsidated genomic RNAs (ribonucleoproteins, RNPs). Acts as an adapter between viral RNPs complexes and the nuclear export machinery of the cell. Possesses no intrinsic RNA-binding activity, but includes a C-terminal M1-binding domain. This domain is believed to allow recognition of RNPs to which the M1 protein is bound. Because the M1 protein is not available in large quantities until the later stages of infection, such an indirect recognition mechanism probably ensures that genomic RNPs are not exported from the nucleus before sufficient quantities of viral mRNA and progeny genomic RNA have been synthesized. Furthermore, the RNPs enters the cytoplasm only when they have associated with the M1 protein that is necessary to guide them to the plasma membrane. May down-regulate viral RNA synthesis when overproduced. This Influenza C virus (strain C/Great lakes/1167/1954) protein is Nuclear export protein (NS).